The sequence spans 143 residues: ATP synthase epsilon chain (143 aa).

The protein belongs to the ATPase epsilon chain family. F-type ATPases have 2 components, CF(1) - the catalytic core - and CF(0) - the membrane proton channel. CF(1) has five subunits: alpha(3), beta(3), gamma(1), delta(1), epsilon(1). CF(0) has three main subunits: a, b and c.

The protein resides in the cell membrane. Functionally, produces ATP from ADP in the presence of a proton gradient across the membrane. The polypeptide is ATP synthase epsilon chain (Lacticaseibacillus casei (strain BL23) (Lactobacillus casei)).